A 227-amino-acid chain; its full sequence is Glutathione S-transferase U18 (227 aa).

Residues Glu4–Gly83 form the GST N-terminal domain. Glutathione contacts are provided by residues Ser14–Val15, Ser40–Lys41, Lys54–Met55, and Glu67–Ser68. The region spanning His90–Leu221 is the GST C-terminal domain.

It belongs to the GST superfamily. Tau family.

Its subcellular location is the cytoplasm. The protein localises to the cytosol. The catalysed reaction is RX + glutathione = an S-substituted glutathione + a halide anion + H(+). Functionally, may be involved in the conjugation of reduced glutathione to a wide number of exogenous and endogenous hydrophobic electrophiles and have a detoxification role against certain herbicides. The polypeptide is Glutathione S-transferase U18 (GSTU18) (Arabidopsis thaliana (Mouse-ear cress)).